A 444-amino-acid chain; its full sequence is ATP-dependent protease ATPase subunit HslU (444 aa).

ATP contacts are provided by residues Ile-18 and 60-65 (GVGKTE). Residues 143 to 163 (WGEVESHDSHSSTRQAFRKKL) form a disordered region. ATP contacts are provided by Asp-257, Glu-322, and Arg-394.

It belongs to the ClpX chaperone family. HslU subfamily. As to quaternary structure, a double ring-shaped homohexamer of HslV is capped on each side by a ring-shaped HslU homohexamer. The assembly of the HslU/HslV complex is dependent on binding of ATP.

The protein localises to the cytoplasm. In terms of biological role, ATPase subunit of a proteasome-like degradation complex; this subunit has chaperone activity. The binding of ATP and its subsequent hydrolysis by HslU are essential for unfolding of protein substrates subsequently hydrolyzed by HslV. HslU recognizes the N-terminal part of its protein substrates and unfolds these before they are guided to HslV for hydrolysis. In Haemophilus influenzae (strain PittEE), this protein is ATP-dependent protease ATPase subunit HslU.